The following is a 361-amino-acid chain: Phosphoserine aminotransferase (361 aa).

Position 42 (arginine 42) interacts with L-glutamate. Pyridoxal 5'-phosphate-binding positions include 76–77, tryptophan 102, threonine 153, aspartate 173, and glutamine 196; that span reads AR. An N6-(pyridoxal phosphate)lysine modification is found at lysine 197. A pyridoxal 5'-phosphate-binding site is contributed by 238-239; the sequence is NT.

Belongs to the class-V pyridoxal-phosphate-dependent aminotransferase family. SerC subfamily. As to quaternary structure, homodimer. It depends on pyridoxal 5'-phosphate as a cofactor.

It is found in the cytoplasm. The enzyme catalyses O-phospho-L-serine + 2-oxoglutarate = 3-phosphooxypyruvate + L-glutamate. The catalysed reaction is 4-(phosphooxy)-L-threonine + 2-oxoglutarate = (R)-3-hydroxy-2-oxo-4-phosphooxybutanoate + L-glutamate. Its pathway is amino-acid biosynthesis; L-serine biosynthesis; L-serine from 3-phospho-D-glycerate: step 2/3. It participates in cofactor biosynthesis; pyridoxine 5'-phosphate biosynthesis; pyridoxine 5'-phosphate from D-erythrose 4-phosphate: step 3/5. Catalyzes the reversible conversion of 3-phosphohydroxypyruvate to phosphoserine and of 3-hydroxy-2-oxo-4-phosphonooxybutanoate to phosphohydroxythreonine. The chain is Phosphoserine aminotransferase from Pectobacterium carotovorum subsp. carotovorum (strain PC1).